Consider the following 89-residue polypeptide: Small ribosomal subunit protein uS15 (89 aa).

It belongs to the universal ribosomal protein uS15 family. As to quaternary structure, part of the 30S ribosomal subunit. Forms a bridge to the 50S subunit in the 70S ribosome, contacting the 23S rRNA.

Functionally, one of the primary rRNA binding proteins, it binds directly to 16S rRNA where it helps nucleate assembly of the platform of the 30S subunit by binding and bridging several RNA helices of the 16S rRNA. Its function is as follows. Forms an intersubunit bridge (bridge B4) with the 23S rRNA of the 50S subunit in the ribosome. The chain is Small ribosomal subunit protein uS15 from Lactiplantibacillus plantarum (strain ATCC BAA-793 / NCIMB 8826 / WCFS1) (Lactobacillus plantarum).